The sequence spans 359 residues: Protein RecA (359 aa).

73–80 (GPESSGKT) contacts ATP.

The protein belongs to the RecA family.

Its subcellular location is the cytoplasm. Can catalyze the hydrolysis of ATP in the presence of single-stranded DNA, the ATP-dependent uptake of single-stranded DNA by duplex DNA, and the ATP-dependent hybridization of homologous single-stranded DNAs. It interacts with LexA causing its activation and leading to its autocatalytic cleavage. This Desulfovibrio desulfuricans (strain ATCC 27774 / DSM 6949 / MB) protein is Protein RecA.